Consider the following 184-residue polypeptide: Cytidylate kinase (184 aa).

8–16 (GQPGSGKTT) provides a ligand contact to ATP.

Belongs to the cytidylate kinase family. Type 2 subfamily.

It localises to the cytoplasm. It carries out the reaction CMP + ATP = CDP + ADP. The enzyme catalyses dCMP + ATP = dCDP + ADP. This chain is Cytidylate kinase, found in Pyrobaculum aerophilum (strain ATCC 51768 / DSM 7523 / JCM 9630 / CIP 104966 / NBRC 100827 / IM2).